The chain runs to 503 residues: ATP synthase subunit alpha (503 aa).

169–176 provides a ligand contact to ATP; sequence GDRSTGKT.

This sequence belongs to the ATPase alpha/beta chains family. F-type ATPases have 2 components, CF(1) - the catalytic core - and CF(0) - the membrane proton channel. CF(1) has five subunits: alpha(3), beta(3), gamma(1), delta(1), epsilon(1). CF(0) has three main subunits: a(1), b(2) and c(9-12). The alpha and beta chains form an alternating ring which encloses part of the gamma chain. CF(1) is attached to CF(0) by a central stalk formed by the gamma and epsilon chains, while a peripheral stalk is formed by the delta and b chains.

The protein resides in the cell membrane. The catalysed reaction is ATP + H2O + 4 H(+)(in) = ADP + phosphate + 5 H(+)(out). Produces ATP from ADP in the presence of a proton gradient across the membrane. The alpha chain is a regulatory subunit. The chain is ATP synthase subunit alpha from Dehalococcoides mccartyi (strain ATCC BAA-2266 / KCTC 15142 / 195) (Dehalococcoides ethenogenes (strain 195)).